We begin with the raw amino-acid sequence, 218 residues long: OPA3-like protein (218 aa).

Positions N129–N179 form a coiled coil. The tract at residues T175–G218 is disordered. Residues L176–A189 show a composition bias toward polar residues. Residues E194–H206 are compositionally biased toward basic and acidic residues. Over residues P208–G218 the composition is skewed to polar residues.

It belongs to the OPA3 family.

This chain is OPA3-like protein, found in Schizosaccharomyces pombe (strain 972 / ATCC 24843) (Fission yeast).